A 306-amino-acid chain; its full sequence is Acetyl-coenzyme A carboxylase carboxyl transferase subunit beta (306 aa).

A CoA carboxyltransferase N-terminal domain is found at 28-297 (LWIKCPDTGQ…TPAGKPSTPV (270 aa)). Residues 287 to 306 (QTPAGKPSTPVAPEPVPDAA) form a disordered region. A compositionally biased stretch (pro residues) spans 296-306 (PVAPEPVPDAA).

It belongs to the AccD/PCCB family. Acetyl-CoA carboxylase is a heterohexamer composed of biotin carboxyl carrier protein (AccB), biotin carboxylase (AccC) and two subunits each of ACCase subunit alpha (AccA) and ACCase subunit beta (AccD).

It localises to the cytoplasm. The catalysed reaction is N(6)-carboxybiotinyl-L-lysyl-[protein] + acetyl-CoA = N(6)-biotinyl-L-lysyl-[protein] + malonyl-CoA. It functions in the pathway lipid metabolism; malonyl-CoA biosynthesis; malonyl-CoA from acetyl-CoA: step 1/1. Component of the acetyl coenzyme A carboxylase (ACC) complex. Biotin carboxylase (BC) catalyzes the carboxylation of biotin on its carrier protein (BCCP) and then the CO(2) group is transferred by the transcarboxylase to acetyl-CoA to form malonyl-CoA. In Methylorubrum populi (strain ATCC BAA-705 / NCIMB 13946 / BJ001) (Methylobacterium populi), this protein is Acetyl-coenzyme A carboxylase carboxyl transferase subunit beta.